The chain runs to 187 residues: Ion-translocating oxidoreductase complex subunit B (187 aa).

A hydrophobic region spans residues 1–23 (MIAAAASMSALGLGLGYLLGAAA). One can recognise a 4Fe-4S domain in the interval 29 to 88 (ETPPIVEEIAKILPGTNCGACGFPGCNGLAEAMAEGNAPVTACTPGGRDVALALAEIVTV). Positions 46, 49, 54, 71, 112, 115, 118, 122, 142, 145, 148, and 152 each coordinate [4Fe-4S] cluster. 4Fe-4S ferredoxin-type domains lie at 103-132 (MVAF…GGAK) and 133-162 (QIHT…SRVK).

It belongs to the 4Fe4S bacterial-type ferredoxin family. RnfB subfamily. The complex is composed of six subunits: RnfA, RnfB, RnfC, RnfD, RnfE and RnfG. The cofactor is [4Fe-4S] cluster.

It localises to the cellular chromatophore membrane. In terms of biological role, part of a membrane-bound complex that couples electron transfer with translocation of ions across the membrane. Required for nitrogen fixation. Involved in electron transfer to nitrogenase. This Rhodobacter capsulatus (Rhodopseudomonas capsulata) protein is Ion-translocating oxidoreductase complex subunit B.